The primary structure comprises 214 residues: Urease accessory protein UreF (214 aa).

It belongs to the UreF family. UreD, UreF and UreG form a complex that acts as a GTP-hydrolysis-dependent molecular chaperone, activating the urease apoprotein by helping to assemble the nickel containing metallocenter of UreC. The UreE protein probably delivers the nickel.

It localises to the cytoplasm. Required for maturation of urease via the functional incorporation of the urease nickel metallocenter. This chain is Urease accessory protein UreF, found in Ruegeria sp. (strain TM1040) (Silicibacter sp.).